The chain runs to 130 residues: C-C motif chemokine 28 (130 aa).

A signal peptide spans 1 to 16 (MQQAGLTLMAVAVCVA). Intrachain disulfides connect Cys30–Cys58 and Cys31–Cys73. Asn78 is a glycosylation site (N-linked (GlcNAc...) asparagine). The tract at residues 92–130 (KNGRENVCSGKKQPSRKDRKGHTTRKHRTRGTHRHEASR) is disordered. A compositionally biased stretch (basic residues) spans 104 to 124 (QPSRKDRKGHTTRKHRTRGTH).

Belongs to the intercrine beta (chemokine CC) family. In terms of tissue distribution, mainly expressed in testis, epithelial cells of normal colon, kidney, Peyer patches, lymph nodes. Also found in lower levels in brain, spleen and lung.

Its subcellular location is the secreted. Its function is as follows. Chemotactic for resting CD4, CD8 T-cells and eosinophils. Binds to CCR10 and induces calcium mobilization in a dose-dependent manner. In Mus musculus (Mouse), this protein is C-C motif chemokine 28 (Ccl28).